Reading from the N-terminus, the 826-residue chain is Ribonucleoside-diphosphate reductase large subunit (826 aa).

Substrate-binding positions include T171, 186 to 187 (SC), G217, 387 to 391 (NLCAE), and 594 to 598 (PTSGC). An intrachain disulfide couples C187 to C403. N387 serves as the catalytic Proton acceptor. Catalysis depends on C389, which acts as the Cysteine radical intermediate. The active-site Proton acceptor is the E391.

It belongs to the ribonucleoside diphosphate reductase large chain family. As to quaternary structure, heterotetramer composed of a homodimer of the large subunit (R1) and a homodimer of the small subunit (R2). Larger multisubunit protein complex are also active, composed of (R1)n(R2)n.

It carries out the reaction a 2'-deoxyribonucleoside 5'-diphosphate + [thioredoxin]-disulfide + H2O = a ribonucleoside 5'-diphosphate + [thioredoxin]-dithiol. In terms of biological role, ribonucleoside-diphosphate reductase holoenzyme provides the precursors necessary for viral DNA synthesis. Allows virus growth in non-dividing cells, as well as reactivation from latency in infected hosts. Catalyzes the biosynthesis of deoxyribonucleotides from the corresponding ribonucleotides. The sequence is that of Ribonucleoside-diphosphate reductase large subunit from Epstein-Barr virus (strain GD1) (HHV-4).